Here is an 877-residue protein sequence, read N- to C-terminus: Clumping factor B (877 aa).

Residues 1 to 44 (MKKRIDYLSNKQNKYSIRRFTVGTTSVIVGATILFGIGNHQAQA) form the signal peptide. Residues 15–26 (YSIRRFTVGTTS) carry the YSIRK-G/S signaling motif motif. Composition is skewed to polar residues over residues 44–61 (ASEQSNDTTQSSKNNASA) and 68–95 (MIETPQLNTTANDTSDISANTNSANVDS). Residues 44–192 (ASEQSNDTTQ…QGTSKPSVRT (149 aa)) are disordered. The tract at residues 45 to 542 (SEQSNDTTQS…GSADGDSAVN (498 aa)) is ligand binding A region. The segment covering 96-119 (TTKPMSTQTSNTTTTEPASTNETP) has biased composition (low complexity). The span at 120–189 (QPTAIKNQAT…SNAQGTSKPS (70 aa)) shows a compositional bias: polar residues. The short motif at 272 to 276 (DYSNS) is the MIDAS-like motif element. Positions 530–849 (YGGGSADGDS…ETGDKSENTN (320 aa)) are disordered. Over residues 545–555 (DPTPGPPVDPE) the composition is skewed to pro residues. Positions 556–801 (PSPDPEPEPT…SDSDSDSDSD (246 aa)) are enriched in acidic residues. Over residues 805-816 (RVTPPNNEQKAP) the composition is skewed to polar residues. The segment covering 833–846 (HKTDALPETGDKSE) has biased composition (basic and acidic residues). The short motif at 838 to 842 (LPETG) is the LPXTG sorting signal element. T841 is modified (pentaglycyl murein peptidoglycan amidated threonine). A propeptide spans 842-877 (GDKSENTNATLFGAMMALLGSLLLFRKRKQDHKEKA) (removed by sortase).

This sequence belongs to the serine-aspartate repeat-containing protein (SDr) family. Post-translationally, proteolytically cleaved by aureolysin (aur). This cleavage leads to the inactivation of ClfB.

The protein resides in the secreted. The protein localises to the cell wall. Its function is as follows. Cell surface-associated protein implicated in virulence by promoting bacterial attachment to both alpha- and beta-chains of human fibrinogen and inducing the formation of bacterial clumps. The chain is Clumping factor B (clfB) from Staphylococcus aureus (strain Mu50 / ATCC 700699).